A 457-amino-acid chain; its full sequence is Neuropeptide receptor npr-1 (457 aa).

The Extracellular portion of the chain corresponds to Met1–Ser22. A helical membrane pass occupies residues Ile23–Gly43. The Cytoplasmic segment spans residues Asn44–Asn62. A helical membrane pass occupies residues Ile63–Thr83. Over Pro84–His100 the chain is Extracellular. Cys99 and Cys178 are disulfide-bonded. Residues Leu101–Ala121 traverse the membrane as a helical segment. Residues Leu122 to Gly140 lie on the Cytoplasmic side of the membrane. The chain crosses the membrane as a helical span at residues Ala141–Phe161. Over Asn162–Met193 the chain is Extracellular. Residues Ile194–Ile214 traverse the membrane as a helical segment. Residues Val215–Leu279 are Cytoplasmic-facing. The helical transmembrane segment at Val280–Ile300 threads the bilayer. Residues Glu301–Asn324 lie on the Extracellular side of the membrane. A helical membrane pass occupies residues Leu325–Leu345. Residues Asn346 to Val457 lie on the Cytoplasmic side of the membrane.

The protein belongs to the G-protein coupled receptor 1 family. As to expression, expressed in neurons, including neurons in the head, the ventral nerve cord, and the preanal ganglion.

It localises to the membrane. G-protein coupled receptor for FARP(FMRFamide related peptide) neuropeptides. Activated by FARP neuropeptides flp-18 and flp-21. Plays a role in modulating social and feeding behavior. Required to modulate locomotion quiescence during the sleep-like state called lethargus, which occurs during molting between larval and adult stages, in part by regulating touch sensitivity. The sequence is that of Neuropeptide receptor npr-1 from Caenorhabditis elegans.